A 257-amino-acid chain; its full sequence is Large ribosomal subunit protein uL3 (257 aa).

A disordered region spans residues 232–257; it reads LKAPKKQKTKVETNQVNPKIEEEKTK.

It belongs to the universal ribosomal protein uL3 family. Part of the 50S ribosomal subunit. Forms a cluster with proteins L14 and L19.

In terms of biological role, one of the primary rRNA binding proteins, it binds directly near the 3'-end of the 23S rRNA, where it nucleates assembly of the 50S subunit. In Mycoplasma genitalium (strain ATCC 33530 / DSM 19775 / NCTC 10195 / G37) (Mycoplasmoides genitalium), this protein is Large ribosomal subunit protein uL3.